The primary structure comprises 124 residues: Large ribosomal subunit protein bL12 (124 aa).

It belongs to the bacterial ribosomal protein bL12 family. As to quaternary structure, homodimer. Part of the ribosomal stalk of the 50S ribosomal subunit. Forms a multimeric L10(L12)X complex, where L10 forms an elongated spine to which 2 to 4 L12 dimers bind in a sequential fashion. Binds GTP-bound translation factors.

Functionally, forms part of the ribosomal stalk which helps the ribosome interact with GTP-bound translation factors. Is thus essential for accurate translation. This chain is Large ribosomal subunit protein bL12, found in Aromatoleum aromaticum (strain DSM 19018 / LMG 30748 / EbN1) (Azoarcus sp. (strain EbN1)).